The primary structure comprises 620 residues: Chaperone protein HscA homolog (620 aa).

Belongs to the heat shock protein 70 family.

Its function is as follows. Chaperone involved in the maturation of iron-sulfur cluster-containing proteins. Has a low intrinsic ATPase activity which is markedly stimulated by HscB. The sequence is that of Chaperone protein HscA homolog from Acinetobacter baylyi (strain ATCC 33305 / BD413 / ADP1).